An 883-amino-acid chain; its full sequence is Probable pre-mRNA-splicing factor ATP-dependent RNA helicase DEAH8 (883 aa).

One can recognise a Helicase ATP-binding domain in the interval 232–395 (LKLIEENQVL…FDSARIYLIP (164 aa)). Residue 245 to 252 (GETGSGKT) coordinates ATP. The DEAH box motif lies at 342-345 (DEAH). In terms of domain architecture, Helicase C-terminal spans 416–589 (TVIRTVVQIH…SVVLTLKSLG (174 aa)). Residues 845–883 (EDTRPKKTQRRIEEASTSKVDTNKKTRTSKVDTNKKSKR) are disordered.

This sequence belongs to the DEAD box helicase family. DEAH subfamily. PRP2 sub-subfamily. In terms of tissue distribution, predominantly expressed in flowers.

It catalyses the reaction ATP + H2O = ADP + phosphate + H(+). Its function is as follows. May be involved in pre-mRNA splicing. In Arabidopsis thaliana (Mouse-ear cress), this protein is Probable pre-mRNA-splicing factor ATP-dependent RNA helicase DEAH8.